Here is a 669-residue protein sequence, read N- to C-terminus: Dymeclin (669 aa).

A lipid anchor (N-myristoyl glycine) is attached at glycine 2.

It belongs to the dymeclin family. As to quaternary structure, interacts with GOLM1 and PPIB. Post-translationally, myristoylated in vitro; myristoylation is not essential for protein targeting to Golgi compartment.

The protein resides in the cytoplasm. It is found in the golgi apparatus. The protein localises to the membrane. In terms of biological role, necessary for correct organization of Golgi apparatus. Involved in bone development. The chain is Dymeclin (DYM) from Pongo abelii (Sumatran orangutan).